The chain runs to 156 residues: Arginine repressor (156 aa).

The protein belongs to the ArgR family.

The protein localises to the cytoplasm. It functions in the pathway amino-acid biosynthesis; L-arginine biosynthesis [regulation]. Its function is as follows. Regulates arginine biosynthesis genes. This Proteus mirabilis (strain HI4320) protein is Arginine repressor.